Consider the following 358-residue polypeptide: Aminodeoxyfutalosine deaminase (358 aa).

Positions 32 and 34 each coordinate Zn(2+). Residues Arg87, Asp154, and Gly188 each contribute to the substrate site. Residue His215 coordinates Zn(2+). Catalysis depends on Glu218, which acts as the Proton donor. Asp296 contacts Zn(2+).

It belongs to the metallo-dependent hydrolases superfamily. Adenosine and AMP deaminases family. Zn(2+) is required as a cofactor.

It carries out the reaction 6-amino-6-deoxyfutalosine + H2O + H(+) = futalosine + NH4(+). It participates in quinol/quinone metabolism; menaquinone biosynthesis. Functionally, catalyzes the deamination of aminodeoxyfutalosine (AFL) into futalosine (FL), a step in the biosynthesis of menaquinone (MK, vitamin K2). To a lesser extent, can also deaminate adenosine, 5'-methylthioadenosine, 5'-deoxyadenosine, and 2'-deoxyadenosine. This is Aminodeoxyfutalosine deaminase (add2) from Streptomyces avermitilis (strain ATCC 31267 / DSM 46492 / JCM 5070 / NBRC 14893 / NCIMB 12804 / NRRL 8165 / MA-4680).